A 154-amino-acid polypeptide reads, in one-letter code: Large ribosomal subunit protein uL15 (154 aa).

The segment covering 1–13 (MKLNELRDHEGAT) has biased composition (basic and acidic residues). Residues 1 to 44 (MKLNELRDHEGATKNRKRIGRGIGSGTGKTGGCGVKGQKSRSGV) are disordered. Over residues 21-35 (RGIGSGTGKTGGCGV) the composition is skewed to gly residues.

This sequence belongs to the universal ribosomal protein uL15 family. As to quaternary structure, part of the 50S ribosomal subunit.

Functionally, binds to the 23S rRNA. The chain is Large ribosomal subunit protein uL15 from Bartonella bacilliformis (strain ATCC 35685 / KC583 / Herrer 020/F12,63).